Here is a 208-residue protein sequence, read N- to C-terminus: Outer-membrane lipoprotein carrier protein (208 aa).

The N-terminal stretch at 1–23 (MKKTVKNLTALLTLALAAPWALA) is a signal peptide.

Belongs to the LolA family. As to quaternary structure, monomer.

Its subcellular location is the periplasm. Participates in the translocation of lipoproteins from the inner membrane to the outer membrane. Only forms a complex with a lipoprotein if the residue after the N-terminal Cys is not an aspartate (The Asp acts as a targeting signal to indicate that the lipoprotein should stay in the inner membrane). The chain is Outer-membrane lipoprotein carrier protein from Actinobacillus succinogenes (strain ATCC 55618 / DSM 22257 / CCUG 43843 / 130Z).